The primary structure comprises 94 residues: Integration host factor subunit beta (94 aa).

It belongs to the bacterial histone-like protein family. Heterodimer of an alpha and a beta chain.

Its function is as follows. This protein is one of the two subunits of integration host factor, a specific DNA-binding protein that functions in genetic recombination as well as in transcriptional and translational control. The protein is Integration host factor subunit beta of Yersinia enterocolitica serotype O:8 / biotype 1B (strain NCTC 13174 / 8081).